A 271-amino-acid chain; its full sequence is Proteasome inhibitor PI31 subunit (271 aa).

N-acetylalanine is present on Ala2. The interval 2–150 is important for homodimerization and interaction with FBXO7; the sequence is AGLEVLFASA…PIHEQWEKAN (149 aa). A Phosphoserine modification is found at Ser153. At Arg205 the chain carries Omega-N-methylarginine. The residue at position 219 (Arg219) is an Asymmetric dimethylarginine. Residues 222–271 form a disordered region; sequence IDPSSGLPNRLPPGAVPPGARFDPFGPIGTSPPGPNPDHLPPPGYDDMYL. At Arg231 the chain carries Omega-N-methylarginine. A compositionally biased stretch (pro residues) spans 251 to 265; the sequence is TSPPGPNPDHLPPPG. Phosphoserine is present on Ser252.

The protein belongs to the proteasome inhibitor PI31 family. As to quaternary structure, monomer and homodimer. Interacts with FBXO7. Interacts with the 20S proteasome.

It is found in the cytoplasm. Its subcellular location is the endoplasmic reticulum. Its function is as follows. Plays an important role in control of proteasome function. Inhibits the hydrolysis of protein and peptide substrates by the 20S proteasome. Also inhibits the activation of the proteasome by the proteasome regulatory proteins PA700 and PA28. This is Proteasome inhibitor PI31 subunit (PSMF1) from Homo sapiens (Human).